Reading from the N-terminus, the 712-residue chain is Phosphomethylpyrimidine synthase (712 aa).

The disordered stretch occupies residues 14-49; sequence AIDITAPESTIPNKSKVPNKSAESSQSTVPKAPSRR. Polar residues predominate over residues 20–42; sequence PESTIPNKSKVPNKSAESSQSTV. Substrate contacts are provided by residues N283, M312, Y341, H377, 397 to 399, 438 to 441, and E477; these read SRG and DGMR. Zn(2+) is bound at residue H481. Residue Y504 participates in substrate binding. H545 contacts Zn(2+). [4Fe-4S] cluster-binding residues include C625, C628, and C633.

This sequence belongs to the ThiC family. Homodimer. It depends on [4Fe-4S] cluster as a cofactor.

It catalyses the reaction 5-amino-1-(5-phospho-beta-D-ribosyl)imidazole + S-adenosyl-L-methionine = 4-amino-2-methyl-5-(phosphooxymethyl)pyrimidine + CO + 5'-deoxyadenosine + formate + L-methionine + 3 H(+). It participates in cofactor biosynthesis; thiamine diphosphate biosynthesis. Catalyzes the synthesis of the hydroxymethylpyrimidine phosphate (HMP-P) moiety of thiamine from aminoimidazole ribotide (AIR) in a radical S-adenosyl-L-methionine (SAM)-dependent reaction. This Shewanella putrefaciens (strain CN-32 / ATCC BAA-453) protein is Phosphomethylpyrimidine synthase.